We begin with the raw amino-acid sequence, 458 residues long: ATP synthase subunit beta (458 aa).

148-155 (GGAGVGKT) serves as a coordination point for ATP.

Belongs to the ATPase alpha/beta chains family. In terms of assembly, F-type ATPases have 2 components, CF(1) - the catalytic core - and CF(0) - the membrane proton channel. CF(1) has five subunits: alpha(3), beta(3), gamma(1), delta(1), epsilon(1). CF(0) has three main subunits: a(1), b(2) and c(9-12). The alpha and beta chains form an alternating ring which encloses part of the gamma chain. CF(1) is attached to CF(0) by a central stalk formed by the gamma and epsilon chains, while a peripheral stalk is formed by the delta and b chains.

It localises to the cell inner membrane. The enzyme catalyses ATP + H2O + 4 H(+)(in) = ADP + phosphate + 5 H(+)(out). In terms of biological role, produces ATP from ADP in the presence of a proton gradient across the membrane. The catalytic sites are hosted primarily by the beta subunits. This is ATP synthase subunit beta from Legionella pneumophila (strain Paris).